Consider the following 190-residue polypeptide: Xanthine phosphoribosyltransferase (190 aa).

Residues leucine 20 and asparagine 27 each contribute to the xanthine site. Residue 128 to 132 participates in 5-phospho-alpha-D-ribose 1-diphosphate binding; that stretch reads ANGKA. Residue lysine 156 participates in xanthine binding.

Belongs to the purine/pyrimidine phosphoribosyltransferase family. Xpt subfamily. Homodimer.

It localises to the cytoplasm. It catalyses the reaction XMP + diphosphate = xanthine + 5-phospho-alpha-D-ribose 1-diphosphate. Its pathway is purine metabolism; XMP biosynthesis via salvage pathway; XMP from xanthine: step 1/1. Its function is as follows. Converts the preformed base xanthine, a product of nucleic acid breakdown, to xanthosine 5'-monophosphate (XMP), so it can be reused for RNA or DNA synthesis. This chain is Xanthine phosphoribosyltransferase, found in Pseudomonas fluorescens (strain Pf0-1).